The primary structure comprises 185 residues: Segregation and condensation protein B (185 aa).

Belongs to the ScpB family. In terms of assembly, homodimer. Homodimerization may be required to stabilize the binding of ScpA to the Smc head domains. Component of a cohesin-like complex composed of ScpA, ScpB and the Smc homodimer, in which ScpA and ScpB bind to the head domain of Smc. The presence of the three proteins is required for the association of the complex with DNA.

It localises to the cytoplasm. Its function is as follows. Participates in chromosomal partition during cell division. May act via the formation of a condensin-like complex containing Smc and ScpA that pull DNA away from mid-cell into both cell halves. This Carboxydothermus hydrogenoformans (strain ATCC BAA-161 / DSM 6008 / Z-2901) protein is Segregation and condensation protein B.